Here is a 59-residue protein sequence, read N- to C-terminus: Mitochondrial sheath formation-associated protein (59 aa).

Over 1-6 the chain is Mitochondrial intermembrane; it reads MIVLGW. A run of 2 helical transmembrane segments spans residues 2–22 and 7–23; these read IVLG…FPEL and MFFV…PELM. Topologically, residues 24-40 are cytoplasmic; the sequence is PPTLKWQERWPVQESKT.

As to quaternary structure, interacts with VDAC3.

It localises to the mitochondrion outer membrane. Functionally, regulates sperm development. May be involved in mitochondrial sheath formation. The sequence is that of Mitochondrial sheath formation-associated protein from Homo sapiens (Human).